Consider the following 286-residue polypeptide: Bifunctional protein FolD (286 aa).

Residues Gly166–Ser168 and Ile232 contribute to the NADP(+) site.

The protein belongs to the tetrahydrofolate dehydrogenase/cyclohydrolase family. As to quaternary structure, homodimer.

The catalysed reaction is (6R)-5,10-methylene-5,6,7,8-tetrahydrofolate + NADP(+) = (6R)-5,10-methenyltetrahydrofolate + NADPH. It catalyses the reaction (6R)-5,10-methenyltetrahydrofolate + H2O = (6R)-10-formyltetrahydrofolate + H(+). It functions in the pathway one-carbon metabolism; tetrahydrofolate interconversion. Its function is as follows. Catalyzes the oxidation of 5,10-methylenetetrahydrofolate to 5,10-methenyltetrahydrofolate and then the hydrolysis of 5,10-methenyltetrahydrofolate to 10-formyltetrahydrofolate. The polypeptide is Bifunctional protein FolD (Shewanella piezotolerans (strain WP3 / JCM 13877)).